A 292-amino-acid chain; its full sequence is Bifunctional protein FolD (292 aa).

NADP(+)-binding positions include 169 to 171 (GRS) and Ser-194.

It belongs to the tetrahydrofolate dehydrogenase/cyclohydrolase family. As to quaternary structure, homodimer.

It carries out the reaction (6R)-5,10-methylene-5,6,7,8-tetrahydrofolate + NADP(+) = (6R)-5,10-methenyltetrahydrofolate + NADPH. The catalysed reaction is (6R)-5,10-methenyltetrahydrofolate + H2O = (6R)-10-formyltetrahydrofolate + H(+). Its pathway is one-carbon metabolism; tetrahydrofolate interconversion. Its function is as follows. Catalyzes the oxidation of 5,10-methylenetetrahydrofolate to 5,10-methenyltetrahydrofolate and then the hydrolysis of 5,10-methenyltetrahydrofolate to 10-formyltetrahydrofolate. The protein is Bifunctional protein FolD of Nostoc punctiforme (strain ATCC 29133 / PCC 73102).